The following is an 892-amino-acid chain: Translation initiation factor IF-2 (892 aa).

Disordered stretches follow at residues 144–176 (QQRL…QKTE) and 189–298 (SNSV…SGAH). Positions 207 to 219 (LPRTVRPTPAARP) are enriched in low complexity. The tr-type G domain maps to 391-560 (PRPPVVTIMG…SIQAEVLELK (170 aa)). Residues 400 to 407 (GHVDHGKT), 446 to 450 (DTPGH), and 500 to 503 (SKID) each bind GTP.

It belongs to the TRAFAC class translation factor GTPase superfamily. Classic translation factor GTPase family. IF-2 subfamily.

It localises to the cytoplasm. One of the essential components for the initiation of protein synthesis. Protects formylmethionyl-tRNA from spontaneous hydrolysis and promotes its binding to the 30S ribosomal subunits. Also involved in the hydrolysis of GTP during the formation of the 70S ribosomal complex. This chain is Translation initiation factor IF-2, found in Xylella fastidiosa (strain M12).